A 294-amino-acid chain; its full sequence is Probable 2-(5''-triphosphoribosyl)-3'-dephosphocoenzyme-A synthase (294 aa).

The protein belongs to the CitG/MdcB family.

The enzyme catalyses 3'-dephospho-CoA + ATP = 2'-(5''-triphospho-alpha-D-ribosyl)-3'-dephospho-CoA + adenine. This Streptococcus pyogenes serotype M18 (strain MGAS8232) protein is Probable 2-(5''-triphosphoribosyl)-3'-dephosphocoenzyme-A synthase.